A 277-amino-acid chain; its full sequence is Putative serine/threonine-protein kinase PRKY (277 aa).

Residues M1 to A12 are compositionally biased toward low complexity. Residues M1–E40 form a disordered region. The Protein kinase domain occupies C49–M277. ATP is bound by residues M55–V63 and K78. Catalysis depends on D172, which acts as the Proton acceptor. T203 is modified (phosphothreonine).

This sequence belongs to the protein kinase superfamily. AGC Ser/Thr protein kinase family. cAMP subfamily. As to expression, ubiquitous.

The enzyme catalyses L-seryl-[protein] + ATP = O-phospho-L-seryl-[protein] + ADP + H(+). It catalyses the reaction L-threonyl-[protein] + ATP = O-phospho-L-threonyl-[protein] + ADP + H(+). The polypeptide is Putative serine/threonine-protein kinase PRKY (PRKY) (Homo sapiens (Human)).